The primary structure comprises 248 residues: Polyhedrin (248 aa).

The first 27 residues, 1 to 27 (MADVAGTSNRDFRGREQRLFNSEQYNY), serve as a signal peptide directing secretion. N-linked (GlcNAc...) asparagine; by host glycans are attached at residues Asn-28, Asn-77, Asn-86, and Asn-237.

It is found in the host cytoplasm. Major component of the virus occlusion bodies, which are large proteinaceous structures (polyhedra), that protect the virus from the outside environment for extended periods until they are ingested by insect larvae. This chain is Polyhedrin, found in Bombyx mori cytoplasmic polyhedrosis virus (BmCPV).